A 163-amino-acid chain; its full sequence is Photosystem II extrinsic protein V (163 aa).

The first 26 residues, Met1–Ala26, serve as a signal peptide directing secretion. Positions 63, 66, 67, and 130 each coordinate heme c.

The protein belongs to the cytochrome c family. PsbV subfamily. PSII is composed of 1 copy each of membrane proteins PsbA, PsbB, PsbC, PsbD, PsbE, PsbF, PsbH, PsbI, PsbJ, PsbK, PsbL, PsbM, PsbT, PsbY, PsbZ, Psb30/Ycf12, at least 3 peripheral proteins of the oxygen-evolving complex and a large number of cofactors. It forms dimeric complexes. Heme c serves as cofactor.

The protein resides in the plastid. Its subcellular location is the chloroplast thylakoid membrane. In terms of biological role, one of the extrinsic, lumenal subunits of photosystem II (PSII). PSII is a light-driven water plastoquinone oxidoreductase, using light energy to abstract electrons from H(2)O, generating a proton gradient subsequently used for ATP formation. The extrinsic proteins stabilize the structure of photosystem II oxygen-evolving complex (OEC), the ion environment of oxygen evolution and protect the OEC against heat-induced inactivation. This Phaeodactylum tricornutum (strain CCAP 1055/1) protein is Photosystem II extrinsic protein V.